The primary structure comprises 689 residues: Glycine--tRNA ligase beta subunit (689 aa).

It belongs to the class-II aminoacyl-tRNA synthetase family. Tetramer of two alpha and two beta subunits.

It localises to the cytoplasm. The catalysed reaction is tRNA(Gly) + glycine + ATP = glycyl-tRNA(Gly) + AMP + diphosphate. This is Glycine--tRNA ligase beta subunit from Shigella dysenteriae serotype 1 (strain Sd197).